We begin with the raw amino-acid sequence, 182 residues long: Protein Syd (182 aa).

Belongs to the Syd family.

It is found in the cell inner membrane. In terms of biological role, interacts with the SecY protein in vivo. May bind preferentially to an uncomplexed state of SecY, thus functioning either as a chelating agent for excess SecY in the cell or as a regulatory factor that negatively controls the translocase function. In Pectobacterium atrosepticum (strain SCRI 1043 / ATCC BAA-672) (Erwinia carotovora subsp. atroseptica), this protein is Protein Syd.